Consider the following 368-residue polypeptide: Peptide chain release factor 2 (368 aa).

Position 250 is an N5-methylglutamine (Gln250).

Belongs to the prokaryotic/mitochondrial release factor family. In terms of processing, methylated by PrmC. Methylation increases the termination efficiency of RF2.

It is found in the cytoplasm. Peptide chain release factor 2 directs the termination of translation in response to the peptide chain termination codons UGA and UAA. This chain is Peptide chain release factor 2, found in Rickettsia felis (strain ATCC VR-1525 / URRWXCal2) (Rickettsia azadi).